The following is an 880-amino-acid chain: Beta-N-acetylglucosaminidase (880 aa).

Residues 1–27 form the signal peptide; it reads MKKRLIAPMLLSAASLAFFAMSGSAQA. 3 SPOR domains span residues 70–149, 150–229, and 230–311; these read SGTT…VKAY, GAAQ…LKET, and VKGQ…YQQV. 2 tandem repeats follow at residues 439–473 and 479–513. Positions 630–700 constitute an SH3b domain; it reads TATSTVTADV…VDPNNFSRDS (71 aa).

Belongs to the glycosyl hydrolase 73 family. In terms of assembly, homodimer.

The protein localises to the secreted. Its subcellular location is the cell wall. It catalyses the reaction an N(4)-(oligosaccharide-(1-&gt;3)-[oligosaccharide-(1-&gt;6)]-beta-D-Man-(1-&gt;4)-beta-D-GlcNAc-(1-&gt;4)-alpha-D-GlcNAc)-L-asparaginyl-[protein] + H2O = an oligosaccharide-(1-&gt;3)-[oligosaccharide-(1-&gt;6)]-beta-D-Man-(1-&gt;4)-D-GlcNAc + N(4)-(N-acetyl-beta-D-glucosaminyl)-L-asparaginyl-[protein]. Its activity is regulated as follows. Inhibited by diethyl pyrocarbonate, slightly by EDTA. Not inhibited by PMSF, diisopropyl fluorophosphate, 2-mercaptoethanol or N-ethylmaleimide. Cell wall hydrolase not involved in cell autolysis, competence, sporulation or germination. It hydrolyzes the beta-1,4 glycan bond between the N-acetylglucosaminyl and the N-acetylmuramoyl residues in the glycan chain. In Bacillus subtilis (strain 168), this protein is Beta-N-acetylglucosaminidase (lytD).